Here is a 361-residue protein sequence, read N- to C-terminus: Protein SSUH2 homolog (361 aa).

The protein resides in the cytoplasm. It localises to the nucleus. Functionally, plays a role in odontogenesis. The protein is Protein SSUH2 homolog of Danio rerio (Zebrafish).